The sequence spans 302 residues: Proteasome subunit beta (302 aa).

Over residues 1-10 (MAGRVREVSH) the composition is skewed to basic and acidic residues. The tract at residues 1 to 21 (MAGRVREVSHSSDQSGRLPAA) is disordered. A propeptide spans 1 to 67 (MAGRVREVSH…GPGAGEPPHA (67 aa)) (removed in mature form; by autocatalysis). T68 acts as the Nucleophile in catalysis. Positions 283–302 (RRGNPGGNPGISAVHGDGGN) are disordered.

It belongs to the peptidase T1B family. In terms of assembly, the 20S proteasome core is composed of 14 alpha and 14 beta subunits that assemble into four stacked heptameric rings, resulting in a barrel-shaped structure. The two inner rings, each composed of seven catalytic beta subunits, are sandwiched by two outer rings, each composed of seven alpha subunits. The catalytic chamber with the active sites is on the inside of the barrel. Has a gated structure, the ends of the cylinder being occluded by the N-termini of the alpha-subunits. Is capped by the proteasome-associated ATPase, ARC.

The protein localises to the cytoplasm. It catalyses the reaction Cleavage of peptide bonds with very broad specificity.. The protein operates within protein degradation; proteasomal Pup-dependent pathway. With respect to regulation, the formation of the proteasomal ATPase ARC-20S proteasome complex, likely via the docking of the C-termini of ARC into the intersubunit pockets in the alpha-rings, may trigger opening of the gate for substrate entry. Interconversion between the open-gate and close-gate conformations leads to a dynamic regulation of the 20S proteasome proteolysis activity. Functionally, component of the proteasome core, a large protease complex with broad specificity involved in protein degradation. This is Proteasome subunit beta from Kineococcus radiotolerans (strain ATCC BAA-149 / DSM 14245 / SRS30216).